Reading from the N-terminus, the 365-residue chain is MSWGQALRNYKPTGQQLFFSLTALLAAAVWGRDRQLDIGLFSPQSQLLALGLGFSLAAIAGYWVVPLLRRIKAGQFIREDGPQSHLQKAGTPTMGGIFAIPAGLLPALILAGRSPLVWALAFVTLAYATIGWLDDWQILRHRNNKGISPKLKLCLQFGAAFLFCLWLISQQGWQGTITTITLPFGWSLALSLLFWPLAVFTLVSESNATNLTDGLDGLAGGTGAAVLAGLGLWLAPQDPAIATFCCSLAGGFLGFLLHNRNPARVFMGDTGSLALGGAIAAIAIVANCLWVLLVMGGLFVLESISVILQVSYYKATKGPDGKGKRLLRMAPWHHHLELGGWSETQVVASFYGLTLLLIASCWLLN.

The next 9 membrane-spanning stretches (helical) occupy residues 47–67 (LLALGLGFSLAAIAGYWVVPL), 92–112 (PTMGGIFAIPAGLLPALILAG), 114–134 (SPLVWALAFVTLAYATIGWLD), 153–173 (LCLQFGAAFLFCLWLISQQGW), 180–200 (ITLPFGWSLALSLLFWPLAVF), 215–235 (LDGLAGGTGAAVLAGLGLWLA), 239–259 (PAIATFCCSLAGGFLGFLLHN), 281–301 (AIAIVANCLWVLLVMGGLFVL), and 344–364 (TQVVASFYGLTLLLIASCWLL).

This sequence belongs to the glycosyltransferase 4 family. MraY subfamily. It depends on Mg(2+) as a cofactor.

The protein resides in the cell inner membrane. The catalysed reaction is UDP-N-acetyl-alpha-D-muramoyl-L-alanyl-gamma-D-glutamyl-meso-2,6-diaminopimeloyl-D-alanyl-D-alanine + di-trans,octa-cis-undecaprenyl phosphate = di-trans,octa-cis-undecaprenyl diphospho-N-acetyl-alpha-D-muramoyl-L-alanyl-D-glutamyl-meso-2,6-diaminopimeloyl-D-alanyl-D-alanine + UMP. The protein operates within cell wall biogenesis; peptidoglycan biosynthesis. In terms of biological role, catalyzes the initial step of the lipid cycle reactions in the biosynthesis of the cell wall peptidoglycan: transfers peptidoglycan precursor phospho-MurNAc-pentapeptide from UDP-MurNAc-pentapeptide onto the lipid carrier undecaprenyl phosphate, yielding undecaprenyl-pyrophosphoryl-MurNAc-pentapeptide, known as lipid I. This chain is Phospho-N-acetylmuramoyl-pentapeptide-transferase, found in Synechococcus elongatus (strain ATCC 33912 / PCC 7942 / FACHB-805) (Anacystis nidulans R2).